The following is a 428-amino-acid chain: Serine--tRNA ligase (428 aa).

An L-serine-binding site is contributed by 231 to 233 (TAE). Residue 262–264 (RAE) participates in ATP binding. Residue Glu-285 coordinates L-serine. 349–352 (EISS) provides a ligand contact to ATP. Ser-385 contacts L-serine.

Belongs to the class-II aminoacyl-tRNA synthetase family. Type-1 seryl-tRNA synthetase subfamily. As to quaternary structure, homodimer. The tRNA molecule binds across the dimer.

Its subcellular location is the cytoplasm. It carries out the reaction tRNA(Ser) + L-serine + ATP = L-seryl-tRNA(Ser) + AMP + diphosphate + H(+). The catalysed reaction is tRNA(Sec) + L-serine + ATP = L-seryl-tRNA(Sec) + AMP + diphosphate + H(+). The protein operates within aminoacyl-tRNA biosynthesis; selenocysteinyl-tRNA(Sec) biosynthesis; L-seryl-tRNA(Sec) from L-serine and tRNA(Sec): step 1/1. Catalyzes the attachment of serine to tRNA(Ser). Is also able to aminoacylate tRNA(Sec) with serine, to form the misacylated tRNA L-seryl-tRNA(Sec), which will be further converted into selenocysteinyl-tRNA(Sec). In Methylorubrum populi (strain ATCC BAA-705 / NCIMB 13946 / BJ001) (Methylobacterium populi), this protein is Serine--tRNA ligase.